A 437-amino-acid polypeptide reads, in one-letter code: Phosphoribosylamine--glycine ligase (437 aa).

The 208-residue stretch at 109–316 (KDFLARHGIP…LLDLIEAALN (208 aa)) folds into the ATP-grasp domain. 135-196 (VRQQGAPIVI…EEYLDGEEAS (62 aa)) is a binding site for ATP. Mg(2+)-binding residues include E286 and N288.

Belongs to the GARS family. It depends on Mg(2+) as a cofactor. Requires Mn(2+) as cofactor.

It catalyses the reaction 5-phospho-beta-D-ribosylamine + glycine + ATP = N(1)-(5-phospho-beta-D-ribosyl)glycinamide + ADP + phosphate + H(+). It functions in the pathway purine metabolism; IMP biosynthesis via de novo pathway; N(1)-(5-phospho-D-ribosyl)glycinamide from 5-phospho-alpha-D-ribose 1-diphosphate: step 2/2. The chain is Phosphoribosylamine--glycine ligase from Xylella fastidiosa (strain 9a5c).